The primary structure comprises 116 residues: Ribosome-binding factor A (116 aa).

Belongs to the RbfA family. In terms of assembly, monomer. Binds 30S ribosomal subunits, but not 50S ribosomal subunits or 70S ribosomes.

The protein localises to the cytoplasm. In terms of biological role, one of several proteins that assist in the late maturation steps of the functional core of the 30S ribosomal subunit. Associates with free 30S ribosomal subunits (but not with 30S subunits that are part of 70S ribosomes or polysomes). Required for efficient processing of 16S rRNA. May interact with the 5'-terminal helix region of 16S rRNA. This Chlorobium phaeobacteroides (strain BS1) protein is Ribosome-binding factor A.